Reading from the N-terminus, the 493-residue chain is Glutamate--tRNA ligase (493 aa).

The 'HIGH' region motif lies at 10 to 20; sequence PSPTGDPHVGT. The 'KMSKS' region signature appears at 251–255; sequence KLSKR. Position 254 (Lys254) interacts with ATP.

The protein belongs to the class-I aminoacyl-tRNA synthetase family. Glutamate--tRNA ligase type 1 subfamily. As to quaternary structure, monomer.

It is found in the cytoplasm. It catalyses the reaction tRNA(Glu) + L-glutamate + ATP = L-glutamyl-tRNA(Glu) + AMP + diphosphate. Functionally, catalyzes the attachment of glutamate to tRNA(Glu) in a two-step reaction: glutamate is first activated by ATP to form Glu-AMP and then transferred to the acceptor end of tRNA(Glu). In Pseudomonas putida (strain GB-1), this protein is Glutamate--tRNA ligase.